The chain runs to 290 residues: uncharacterized protein (290 aa).

The protein belongs to the glycosyltransferase 2 family.

This is an uncharacterized protein from Methanocaldococcus jannaschii (strain ATCC 43067 / DSM 2661 / JAL-1 / JCM 10045 / NBRC 100440) (Methanococcus jannaschii).